Here is a 305-residue protein sequence, read N- to C-terminus: Tyrosine recombinase XerD (305 aa).

In terms of domain architecture, Core-binding (CB) spans 1–83 (MEFISQFLEM…TIKSYYEFLI (83 aa)). Positions 104-298 (KLPEILSIDD…QTNHLKKALL (195 aa)) constitute a Tyr recombinase domain. Residues Arg145, Lys175, His250, Arg253, and His276 contribute to the active site. Tyr285 serves as the catalytic O-(3'-phospho-DNA)-tyrosine intermediate.

It belongs to the 'phage' integrase family. XerD subfamily. As to quaternary structure, forms a cyclic heterotetrameric complex composed of two molecules of XerC and two molecules of XerD.

It localises to the cytoplasm. Site-specific tyrosine recombinase, which acts by catalyzing the cutting and rejoining of the recombining DNA molecules. The XerC-XerD complex is essential to convert dimers of the bacterial chromosome into monomers to permit their segregation at cell division. It also contributes to the segregational stability of plasmids. The sequence is that of Tyrosine recombinase XerD from Rickettsia bellii (strain RML369-C).